Consider the following 182-residue polypeptide: Ribosome maturation factor RimM (182 aa).

In terms of domain architecture, PRC barrel spans 106–179; that stretch reads EGEFHVLDLI…RIEITPPPGL (74 aa).

The protein belongs to the RimM family. Binds ribosomal protein uS19.

The protein resides in the cytoplasm. Functionally, an accessory protein needed during the final step in the assembly of 30S ribosomal subunit, possibly for assembly of the head region. Essential for efficient processing of 16S rRNA. May be needed both before and after RbfA during the maturation of 16S rRNA. It has affinity for free ribosomal 30S subunits but not for 70S ribosomes. In Synechococcus elongatus (strain ATCC 33912 / PCC 7942 / FACHB-805) (Anacystis nidulans R2), this protein is Ribosome maturation factor RimM.